Here is a 458-residue protein sequence, read N- to C-terminus: Biphenyl dioxygenase subunit alpha (458 aa).

The Rieske domain maps to 58 to 156 (WLLLGHESHV…KEGDCGFDKA (99 aa)). Residues Cys100, His102, Cys120, and His123 each contribute to the [2Fe-2S] cluster site. The Fe cation site is built by His233 and His239.

The protein belongs to the bacterial ring-hydroxylating dioxygenase alpha subunit family. As to quaternary structure, heterohexamer consisting of three BphA subunits and three BphE subunits. A ferredoxin (BphF) and a ferredoxin reductase (BphG) must be present to obtain activity. Requires [2Fe-2S] cluster as cofactor. It depends on Fe cation as a cofactor.

It catalyses the reaction biphenyl + NADH + O2 + H(+) = (2R,3S)-3-phenylcyclohexa-3,5-diene-1,2-diol + NAD(+). It functions in the pathway xenobiotic degradation; biphenyl degradation; 2-hydroxy-2,4-pentadienoate and benzoate from biphenyl: step 1/4. The polypeptide is Biphenyl dioxygenase subunit alpha (bphA) (Metapseudomonas furukawaii (Pseudomonas furukawaii)).